A 693-amino-acid chain; its full sequence is Alpha-glucosidase (693 aa).

Catalysis depends on residues aspartate 320 and glutamate 323. The active-site Proton donor is aspartate 416.

It belongs to the glycosyl hydrolase 31 family.

It is found in the cytoplasm. The catalysed reaction is Hydrolysis of terminal, non-reducing (1-&gt;4)-linked alpha-D-glucose residues with release of alpha-D-glucose.. Its function is as follows. Major soluble alpha-glucosidase. The sequence is that of Alpha-glucosidase (malA) from Saccharolobus solfataricus (strain ATCC 35092 / DSM 1617 / JCM 11322 / P2) (Sulfolobus solfataricus).